A 315-amino-acid polypeptide reads, in one-letter code: Thioredoxin reductase (315 aa).

Glu45 to Lys52 provides a ligand contact to FAD. Residues Cys145 and Cys148 are joined by a disulfide bond. FAD is bound at residue Asp288–Ile297.

It belongs to the class-II pyridine nucleotide-disulfide oxidoreductase family. In terms of assembly, homodimer. It depends on FAD as a cofactor.

The protein resides in the cytoplasm. It carries out the reaction [thioredoxin]-dithiol + NADP(+) = [thioredoxin]-disulfide + NADPH + H(+). The polypeptide is Thioredoxin reductase (trxB) (Mycoplasma genitalium (strain ATCC 33530 / DSM 19775 / NCTC 10195 / G37) (Mycoplasmoides genitalium)).